Consider the following 288-residue polypeptide: Homoserine kinase (288 aa).

79–89 (PPARGLGSSSA) is a binding site for ATP.

It belongs to the GHMP kinase family. Homoserine kinase subfamily.

It localises to the cytoplasm. The enzyme catalyses L-homoserine + ATP = O-phospho-L-homoserine + ADP + H(+). The protein operates within amino-acid biosynthesis; L-threonine biosynthesis; L-threonine from L-aspartate: step 4/5. Catalyzes the ATP-dependent phosphorylation of L-homoserine to L-homoserine phosphate. This is Homoserine kinase from Listeria monocytogenes serotype 4b (strain CLIP80459).